The chain runs to 506 residues: Glutamate--tRNA ligase (506 aa).

A 'HIGH' region motif is present at residues 21-31; that stretch reads PSPTGTPHVGM. Residues 265-269 carry the 'KMSKS' region motif; it reads KLSKR. Residue lysine 268 coordinates ATP.

It belongs to the class-I aminoacyl-tRNA synthetase family. Glutamate--tRNA ligase type 1 subfamily. Monomer.

It is found in the cytoplasm. It carries out the reaction tRNA(Glu) + L-glutamate + ATP = L-glutamyl-tRNA(Glu) + AMP + diphosphate. Functionally, catalyzes the attachment of glutamate to tRNA(Glu) in a two-step reaction: glutamate is first activated by ATP to form Glu-AMP and then transferred to the acceptor end of tRNA(Glu). In Bifidobacterium longum (strain DJO10A), this protein is Glutamate--tRNA ligase.